Consider the following 890-residue polypeptide: Exo-beta-D-glucosaminidase (890 aa).

Residues 1-18 form the signal peptide; that stretch reads MIAKAVAALLLGSGLASA. Residues 19–26 constitute a propeptide that is removed on maturation; sequence AGTPLTSK. 3 N-linked (GlcNAc...) asparagine glycosylation sites follow: N194, N334, and N438. Catalysis depends on D462, which acts as the Proton donor. The Nucleophile role is filled by E537. N-linked (GlcNAc...) asparagine glycosylation is found at N576 and N687.

This sequence belongs to the glycosyl hydrolase 2 family. In terms of assembly, monomer.

The protein localises to the secreted. It localises to the extracellular space. The enzyme catalyses Hydrolysis of chitosan or chitosan oligosaccharides to remove successive D-glucosamine residues from the non-reducing termini.. Hydrolyzes chitosan and chitooligosaccharides with retention of anomeric configuration. Has no activity against beta-D-galactoside, beta-D-glucuronide, beta-D-mannoside, chitin, glycol chitosan, cellulose, N,N'-diacetylchitibiose and pNP-GlcNAc. The protein is Exo-beta-D-glucosaminidase of Hypocrea virens (Gliocladium virens).